The sequence spans 852 residues: DNA mismatch repair protein MutS (852 aa).

615 to 622 (GPNMAGKS) provides a ligand contact to ATP.

The protein belongs to the DNA mismatch repair MutS family.

Functionally, this protein is involved in the repair of mismatches in DNA. It is possible that it carries out the mismatch recognition step. This protein has a weak ATPase activity. The sequence is that of DNA mismatch repair protein MutS from Thermodesulfovibrio yellowstonii (strain ATCC 51303 / DSM 11347 / YP87).